Consider the following 103-residue polypeptide: Large ribosomal subunit protein bL21 (103 aa).

This sequence belongs to the bacterial ribosomal protein bL21 family. As to quaternary structure, part of the 50S ribosomal subunit. Contacts protein L20.

This protein binds to 23S rRNA in the presence of protein L20. The sequence is that of Large ribosomal subunit protein bL21 from Histophilus somni (strain 129Pt) (Haemophilus somnus).